The sequence spans 311 residues: Pantothenate synthetase (311 aa).

Position 43-50 (43-50 (MGALHEGH)) interacts with ATP. The Proton donor role is filled by H50. Q75 contributes to the (R)-pantoate binding site. Q75 is a binding site for beta-alanine. 161 to 164 (GEKD) is an ATP binding site. Q167 contacts (R)-pantoate. ATP is bound by residues V190 and 198-201 (MSSR).

It belongs to the pantothenate synthetase family. In terms of assembly, homodimer.

It is found in the cytoplasm. It catalyses the reaction (R)-pantoate + beta-alanine + ATP = (R)-pantothenate + AMP + diphosphate + H(+). It functions in the pathway cofactor biosynthesis; (R)-pantothenate biosynthesis; (R)-pantothenate from (R)-pantoate and beta-alanine: step 1/1. In terms of biological role, catalyzes the condensation of pantoate with beta-alanine in an ATP-dependent reaction via a pantoyl-adenylate intermediate. In Mycolicibacterium vanbaalenii (strain DSM 7251 / JCM 13017 / BCRC 16820 / KCTC 9966 / NRRL B-24157 / PYR-1) (Mycobacterium vanbaalenii), this protein is Pantothenate synthetase.